The sequence spans 763 residues: Pentatricopeptide repeat-containing protein At4g32430, mitochondrial (763 aa).

The transit peptide at 1-38 directs the protein to the mitochondrion; it reads MTLLNYLHCNRSKSFLFQRFYSPYRIAHKLFDGSSQRN. PPR repeat units lie at residues 77–109, 110–140, 141–172, 173–207, 208–238, 239–274, 275–309, 310–344, 350–370, 371–405, 406–436, 437–471, 472–507, 508–538, 539–573, 574–604, and 610–640; these read DEVT…GFTS, FVCV…LVDP, DVVS…GVVF, DAFT…GLES, DLVV…MSFK, DMIS…GVEL, DHVS…GYES, LLEV…NVVS, SSNK…GVYP, NEVT…GFVS, EPSV…ITFR, EIIS…TMPN, EYTF…GLNS, CPVV…MSQK, NQFV…NVAP, DLVT…MIEV, and SHEH…VPGG. Residues 645-720 form a type E motif region; it reads MLQSMLGSCR…EAGFSWIDVG (76 aa). Residues 724–756 are type E(+) motif; sequence GSLTMQGFSSGDKSHPKSDEIYRMVEIIGLEMN.

This sequence belongs to the PPR family. PCMP-E subfamily.

It localises to the mitochondrion. The protein is Pentatricopeptide repeat-containing protein At4g32430, mitochondrial (PCMP-E40) of Arabidopsis thaliana (Mouse-ear cress).